An 86-amino-acid chain; its full sequence is U13-theraphotoxin-Cg1b (86 aa).

The first 21 residues, 1 to 21 (MKVSVLITLAVLGVMFVWASA), serve as a signal peptide directing secretion. A propeptide spanning residues 22 to 51 (AELEQSGSDQKDSPAWLKSMERIFQSEERE) is cleaved from the precursor. Disulfide bonds link Cys-52–Cys-66, Cys-59–Cys-71, and Cys-65–Cys-78.

This sequence belongs to the neurotoxin 10 (Hwtx-1) family. 41 (Jztx-36) subfamily. Expressed by the venom gland.

It is found in the secreted. In terms of biological role, probable ion channel inhibitor. In Chilobrachys guangxiensis (Chinese earth tiger tarantula), this protein is U13-theraphotoxin-Cg1b.